Reading from the N-terminus, the 186-residue chain is MQGHRIGYVRVSSFDQNPERQLEQTQVSKVFTDKASGKDTQRPQLEALLSFVREGDTVVVHSMDRLARNLDDLRRLVQKLTQRGVRIEFLKEGLVFTGEDSPMANLMLSVMGAFAEFERALIRERQREGIALAKQRGAYRGRKKALSDEQAATLRQRATAGEPKAQLAREFNISRETLYQYLRTDD.

In terms of domain architecture, Resolvase/invertase-type recombinase catalytic spans 4–137; the sequence is HRIGYVRVSS…EGIALAKQRG (134 aa). Ser-12 functions as the O-(5'-phospho-DNA)-serine intermediate in the catalytic mechanism. The H-T-H motif DNA-binding region spans 164 to 183; sequence KAQLAREFNISRETLYQYLR.

This sequence belongs to the site-specific recombinase resolvase family.

Functionally, resolvase catalyzes the resolution (a site-specific recombination) of the cointegrated replicon to yield the final transposition products. This is Transposons Tn1721 resolvase (tnpR) from Escherichia coli.